Consider the following 332-residue polypeptide: 2,3-bisphosphoglycerate-dependent phosphoglycerate mutase 2 (332 aa).

The transit peptide at 1 to 48 (MATSTTMSHQAIGSVVSQRPFKASQFLKEPLNNVPMKFRQKRFKIEAT) directs the protein to the chloroplast. Substrate-binding positions include 85–92 (RHGESLWN), 98–99 (TG), Arg135, 189–192 (ERMY), Lys200, 216–217 (RR), and 260–261 (GN). The active-site Tele-phosphohistidine intermediate is the His86. Glu189 serves as the catalytic Proton donor/acceptor.

It belongs to the phosphoglycerate mutase family. BPG-dependent PGAM subfamily.

It is found in the plastid. The protein resides in the chloroplast. It carries out the reaction (2R)-2-phosphoglycerate = (2R)-3-phosphoglycerate. Its pathway is carbohydrate degradation; glycolysis; pyruvate from D-glyceraldehyde 3-phosphate: step 3/5. Functionally, catalyzes the interconversion of 2-phosphoglycerate and 3-phosphoglycerate. In Arabidopsis thaliana (Mouse-ear cress), this protein is 2,3-bisphosphoglycerate-dependent phosphoglycerate mutase 2.